The chain runs to 429 residues: Glutamate-1-semialdehyde 2,1-aminomutase 2 (429 aa).

K268 bears the N6-(pyridoxal phosphate)lysine mark.

This sequence belongs to the class-III pyridoxal-phosphate-dependent aminotransferase family. HemL subfamily. In terms of assembly, homodimer. Pyridoxal 5'-phosphate serves as cofactor.

The protein resides in the cytoplasm. It carries out the reaction (S)-4-amino-5-oxopentanoate = 5-aminolevulinate. Its pathway is porphyrin-containing compound metabolism; protoporphyrin-IX biosynthesis; 5-aminolevulinate from L-glutamyl-tRNA(Glu): step 2/2. The sequence is that of Glutamate-1-semialdehyde 2,1-aminomutase 2 from Staphylococcus aureus (strain USA300).